The sequence spans 305 residues: Glutaminase (305 aa).

Residues Ser-63, Asn-113, Glu-158, Asn-165, Tyr-189, Tyr-241, and Val-259 each contribute to the substrate site.

The protein belongs to the glutaminase family. Homotetramer.

It carries out the reaction L-glutamine + H2O = L-glutamate + NH4(+). In Aliarcobacter butzleri (strain RM4018) (Arcobacter butzleri), this protein is Glutaminase.